We begin with the raw amino-acid sequence, 252 residues long: Imidazole glycerol phosphate synthase subunit HisF (252 aa).

Residues D13 and D132 contribute to the active site.

It belongs to the HisA/HisF family. In terms of assembly, heterodimer of HisH and HisF.

It is found in the cytoplasm. The catalysed reaction is 5-[(5-phospho-1-deoxy-D-ribulos-1-ylimino)methylamino]-1-(5-phospho-beta-D-ribosyl)imidazole-4-carboxamide + L-glutamine = D-erythro-1-(imidazol-4-yl)glycerol 3-phosphate + 5-amino-1-(5-phospho-beta-D-ribosyl)imidazole-4-carboxamide + L-glutamate + H(+). The protein operates within amino-acid biosynthesis; L-histidine biosynthesis; L-histidine from 5-phospho-alpha-D-ribose 1-diphosphate: step 5/9. In terms of biological role, IGPS catalyzes the conversion of PRFAR and glutamine to IGP, AICAR and glutamate. The HisF subunit catalyzes the cyclization activity that produces IGP and AICAR from PRFAR using the ammonia provided by the HisH subunit. The sequence is that of Imidazole glycerol phosphate synthase subunit HisF from Campylobacter fetus subsp. fetus (strain 82-40).